Consider the following 276-residue polypeptide: Formamidopyrimidine-DNA glycosylase (276 aa).

Catalysis depends on proline 2, which acts as the Schiff-base intermediate with DNA. The active-site Proton donor is glutamate 3. The active-site Proton donor; for beta-elimination activity is lysine 60. 2 residues coordinate DNA: histidine 93 and arginine 112. An FPG-type zinc finger spans residues 240–274; it reads NVYGKKGEPCVTCGTILEKTVVGGRGTHYCPICQP. Arginine 264 (proton donor; for delta-elimination activity) is an active-site residue.

It belongs to the FPG family. Monomer. The cofactor is Zn(2+).

It catalyses the reaction Hydrolysis of DNA containing ring-opened 7-methylguanine residues, releasing 2,6-diamino-4-hydroxy-5-(N-methyl)formamidopyrimidine.. The catalysed reaction is 2'-deoxyribonucleotide-(2'-deoxyribose 5'-phosphate)-2'-deoxyribonucleotide-DNA = a 3'-end 2'-deoxyribonucleotide-(2,3-dehydro-2,3-deoxyribose 5'-phosphate)-DNA + a 5'-end 5'-phospho-2'-deoxyribonucleoside-DNA + H(+). In terms of biological role, involved in base excision repair of DNA damaged by oxidation or by mutagenic agents. Acts as a DNA glycosylase that recognizes and removes damaged bases. Has a preference for oxidized purines, such as 7,8-dihydro-8-oxoguanine (8-oxoG). Has AP (apurinic/apyrimidinic) lyase activity and introduces nicks in the DNA strand. Cleaves the DNA backbone by beta-delta elimination to generate a single-strand break at the site of the removed base with both 3'- and 5'-phosphates. The polypeptide is Formamidopyrimidine-DNA glycosylase (Bacillus cereus (strain ATCC 14579 / DSM 31 / CCUG 7414 / JCM 2152 / NBRC 15305 / NCIMB 9373 / NCTC 2599 / NRRL B-3711)).